Consider the following 519-residue polypeptide: 3-octaprenyl-4-hydroxybenzoate carboxy-lyase (519 aa).

Position 177 (Asn-177) interacts with Mn(2+). Prenylated FMN is bound by residues 180 to 182, 194 to 196, and 199 to 200; these read IYR, RWL, and RG. Mn(2+) is bound at residue Glu-243. Catalysis depends on Asp-318, which acts as the Proton donor.

The protein belongs to the UbiD family. In terms of assembly, homohexamer. The cofactor is prenylated FMN. Requires Mn(2+) as cofactor.

Its subcellular location is the cell membrane. The catalysed reaction is a 4-hydroxy-3-(all-trans-polyprenyl)benzoate + H(+) = a 2-(all-trans-polyprenyl)phenol + CO2. It participates in cofactor biosynthesis; ubiquinone biosynthesis. In terms of biological role, catalyzes the decarboxylation of 3-octaprenyl-4-hydroxy benzoate to 2-octaprenylphenol, an intermediate step in ubiquinone biosynthesis. This Burkholderia mallei (strain ATCC 23344) protein is 3-octaprenyl-4-hydroxybenzoate carboxy-lyase.